The sequence spans 344 residues: Phosphoribosylformylglycinamidine cyclo-ligase (344 aa).

It belongs to the AIR synthase family.

The protein resides in the cytoplasm. The enzyme catalyses 2-formamido-N(1)-(5-O-phospho-beta-D-ribosyl)acetamidine + ATP = 5-amino-1-(5-phospho-beta-D-ribosyl)imidazole + ADP + phosphate + H(+). The protein operates within purine metabolism; IMP biosynthesis via de novo pathway; 5-amino-1-(5-phospho-D-ribosyl)imidazole from N(2)-formyl-N(1)-(5-phospho-D-ribosyl)glycinamide: step 2/2. The sequence is that of Phosphoribosylformylglycinamidine cyclo-ligase from Neisseria meningitidis serogroup B (strain ATCC BAA-335 / MC58).